We begin with the raw amino-acid sequence, 902 residues long: Auxin response factor 5 (902 aa).

A DNA-binding region (TF-B3) is located at residues 158-260 (FCKTLTASDT…QLMVGVRRAN (103 aa)). The segment at 497–543 (SEMVQPQNKLTVNPSASNTSGQEQNLSQSMSAPAKPENSTLSGCSSG) is disordered. Residues 793–877 (RTYTKVQKTG…RCIRILSPTE (85 aa)) enclose the PB1 domain.

It belongs to the ARF family. As to quaternary structure, homodimers and heterodimers. Interacts with BRX and the auxin-responsive proteins IAA1, IAA12 (BODENLOS), IAA17 and ARF7. In terms of tissue distribution, expressed in the whole plant with a lower expression in leaves. Detected in embryo axis, provascular tissues, procambium and some differentiated vascular regions of mature organs.

It is found in the nucleus. Auxin response factors (ARFs) are transcriptional factors that bind specifically to the DNA sequence 5'-TGTCTC-3' found in the auxin-responsive promoter elements (AuxREs). Seems to act as transcriptional activator. Formation of heterodimers with Aux/IAA proteins may alter their ability to modulate early auxin response genes expression. Mediates embryo axis formation and vascular tissues differentiation. Functionally redundant with ARF7. May be necessary to counteract AMP1 activity. This is Auxin response factor 5 (ARF5) from Arabidopsis thaliana (Mouse-ear cress).